The following is a 500-amino-acid chain: Chromosomal replication initiator protein DnaA (500 aa).

The interval Met1 to Thr37 is disordered. A domain I, interacts with DnaA modulators region spans residues Met1–Lys103. Residues Pro14 to Met27 are compositionally biased toward pro residues. The tract at residues Lys103–Asn161 is domain II. Positions Arg162 to Ala378 are domain III, AAA+ region. Residues Gly206, Gly208, Lys209, and Thr210 each coordinate ATP. The domain IV, binds dsDNA stretch occupies residues Ser379–Tyr500.

It belongs to the DnaA family. Oligomerizes as a right-handed, spiral filament on DNA at oriC.

Its subcellular location is the cytoplasm. Plays an essential role in the initiation and regulation of chromosomal replication. ATP-DnaA binds to the origin of replication (oriC) to initiate formation of the DNA replication initiation complex once per cell cycle. Binds the DnaA box (a 9 base pair repeat at the origin) and separates the double-stranded (ds)DNA. Forms a right-handed helical filament on oriC DNA; dsDNA binds to the exterior of the filament while single-stranded (ss)DNA is stabiized in the filament's interior. The ATP-DnaA-oriC complex binds and stabilizes one strand of the AT-rich DNA unwinding element (DUE), permitting loading of DNA polymerase. After initiation quickly degrades to an ADP-DnaA complex that is not apt for DNA replication. Binds acidic phospholipids. In Cutibacterium acnes (strain DSM 16379 / KPA171202) (Propionibacterium acnes), this protein is Chromosomal replication initiator protein DnaA.